We begin with the raw amino-acid sequence, 345 residues long: tRNA N6-adenosine threonylcarbamoyltransferase (345 aa).

His-111 and His-115 together coordinate Fe cation. Residues 134–138 (LVSGG), Asp-167, Gly-180, and Asn-276 contribute to the substrate site. Asp-304 provides a ligand contact to Fe cation.

It belongs to the KAE1 / TsaD family. Fe(2+) is required as a cofactor.

Its subcellular location is the cytoplasm. The catalysed reaction is L-threonylcarbamoyladenylate + adenosine(37) in tRNA = N(6)-L-threonylcarbamoyladenosine(37) in tRNA + AMP + H(+). Functionally, required for the formation of a threonylcarbamoyl group on adenosine at position 37 (t(6)A37) in tRNAs that read codons beginning with adenine. Is involved in the transfer of the threonylcarbamoyl moiety of threonylcarbamoyl-AMP (TC-AMP) to the N6 group of A37, together with TsaE and TsaB. TsaD likely plays a direct catalytic role in this reaction. The polypeptide is tRNA N6-adenosine threonylcarbamoyltransferase (Alcanivorax borkumensis (strain ATCC 700651 / DSM 11573 / NCIMB 13689 / SK2)).